A 122-amino-acid chain; its full sequence is Large ribosomal subunit protein uL14 (122 aa).

Belongs to the universal ribosomal protein uL14 family. In terms of assembly, part of the 50S ribosomal subunit. Forms a cluster with proteins L3 and L19. In the 70S ribosome, L14 and L19 interact and together make contacts with the 16S rRNA in bridges B5 and B8.

Binds to 23S rRNA. Forms part of two intersubunit bridges in the 70S ribosome. This chain is Large ribosomal subunit protein uL14, found in Acidovorax sp. (strain JS42).